A 389-amino-acid chain; its full sequence is Na(+)/H(+) antiporter NhaA (389 aa).

Helical transmembrane passes span 24–44 (ILLI…AGPA), 56–76 (LSIE…FVGL), 94–114 (LLPI…HYTL), 122–142 (AGTG…LALL), 152–172 (VFLT…IAMF), 176–196 (QFSL…LVLN), 216–236 (FLML…AFAI), 259–279 (PVAF…VIGS), 291–311 (LGII…LSFV), 326–346 (WTHI…SIFI), and 363–383 (MAIL…LSFF).

This sequence belongs to the NhaA Na(+)/H(+) (TC 2.A.33) antiporter family.

It localises to the cell inner membrane. The enzyme catalyses Na(+)(in) + 2 H(+)(out) = Na(+)(out) + 2 H(+)(in). Na(+)/H(+) antiporter that extrudes sodium in exchange for external protons. The sequence is that of Na(+)/H(+) antiporter NhaA from Dechloromonas aromatica (strain RCB).